The sequence spans 396 residues: Ribosomal RNA large subunit methyltransferase I (396 aa).

Residues 2–81 (TVSIYLAKGR…EAIDKDFFVR (80 aa)) enclose the PUA domain.

Belongs to the methyltransferase superfamily. RlmI family.

The protein resides in the cytoplasm. It catalyses the reaction cytidine(1962) in 23S rRNA + S-adenosyl-L-methionine = 5-methylcytidine(1962) in 23S rRNA + S-adenosyl-L-homocysteine + H(+). In terms of biological role, specifically methylates the cytosine at position 1962 (m5C1962) of 23S rRNA. In Aliivibrio fischeri (strain ATCC 700601 / ES114) (Vibrio fischeri), this protein is Ribosomal RNA large subunit methyltransferase I.